The sequence spans 63 residues: Large ribosomal subunit protein bL28 (63 aa).

The tract at residues 1 to 20 is disordered; the sequence is MSRRCAITGKGPMVGNNVSH.

The protein belongs to the bacterial ribosomal protein bL28 family.

The chain is Large ribosomal subunit protein bL28 from Campylobacter curvus (strain 525.92).